Reading from the N-terminus, the 491-residue chain is Nuatigenin 3-beta-glucosyltransferase (491 aa).

His20 functions as the Proton acceptor in the catalytic mechanism. An anthocyanidin is bound at residue His20. Catalysis depends on Asp125, which acts as the Charge relay. 7 residues coordinate UDP-alpha-D-glucose: Ala352, Gln354, His369, Trp372, Asn373, Ser374, and Glu377. An anthocyanidin is bound at residue Ala392. Residues Glu393 and Gln394 each coordinate UDP-alpha-D-glucose.

This sequence belongs to the UDP-glycosyltransferase family. Expressed in roots, stems and leaves.

The catalysed reaction is nuatigenin + UDP-alpha-D-glucose = nuatigenin 3-beta-D-glucopyranoside + UDP + H(+). It catalyses the reaction diosgenin + UDP-alpha-D-glucose = diosgenin 3-O-beta-D-glucoside + UDP + H(+). It carries out the reaction tigogenin + UDP-alpha-D-glucose = tigogenin 3-O-beta-D-glucopyranoside + UDP + H(+). The enzyme catalyses solasodine + UDP-alpha-D-glucose = solasodine 3-beta-D-glucoside + UDP + H(+). The catalysed reaction is solanidine + UDP-alpha-D-glucose = solanidine 3-O-beta-D-glucopyranoside + UDP + H(+). It catalyses the reaction tomatidine + UDP-alpha-D-glucose = tomatidine 3-O-beta-D-glucopyranoside + UDP + H(+). Glucosyltransferase involved in steroid saponin biosynthesis. Catalyzes the 3-O-glucosylation of steroidal sapogenins, such as diosgenin, nuatigenin and tigogenin. Can glucosylate steroidal alkaloids, such as solanidine, solasodine and tomatidine. The sequence is that of Nuatigenin 3-beta-glucosyltransferase from Solanum aculeatissimum (Dutch eggplant).